The primary structure comprises 150 residues: Protein E6 (150 aa).

2 zinc fingers span residues 31 to 67 (CIWCKKHLTGAEVLAYHFKDLVVVWRKDFPYAACAFC) and 104 to 140 (CALCQKPLSQSEKNHHIDTGTRFQFILCQWTGRCTHC).

This sequence belongs to the papillomaviridae E6 protein family. As to quaternary structure, forms homodimers. Interacts with ubiquitin-protein ligase UBE3A/E6-AP; this interaction stimulates UBE3A ubiquitin activity. Interacts with host TP53 and EP300; this interaction inhibits TP53 activity.

Its subcellular location is the host cytoplasm. The protein localises to the host nucleus. Functionally, plays a major role in the induction and maintenance of cellular transformation. E6 associates with host UBE3A/E6-AP ubiquitin-protein ligase and modulates its activity. Sequesters tumor suppressor TP53 in the host cytoplasm and modulates its activity by interacting with host EP300 that results in the reduction of TP53 acetylation and activation. In turn, apoptosis induced by DNA damage is inhibited. E6 also protects host keratinocytes from apoptosis by mediating the degradation of host BAK1. May also inhibit host immune response. The protein is Protein E6 of Homo sapiens (Human).